A 268-amino-acid chain; its full sequence is WUSCHEL-related homeobox 11 (268 aa).

The disordered stretch occupies residues 1–35; it reads MDQEQTPHSPTRHSRSPPSSASGSTSAEPVRSRWS. Residues 16 to 27 are compositionally biased toward low complexity; that stretch reads SPPSSASGSTSA. Positions 29–93 form a DNA-binding region, homeobox; WUS-type; that stretch reads PVRSRWSPKP…NRRSRSRRRQ (65 aa).

This sequence belongs to the WUS homeobox family.

It localises to the nucleus. Transcription factor which may be involved in developmental processes. This chain is WUSCHEL-related homeobox 11 (WOX11), found in Arabidopsis thaliana (Mouse-ear cress).